Reading from the N-terminus, the 213-residue chain is Pyrrolidone-carboxylate peptidase (213 aa).

Active-site residues include Glu-78, Cys-141, and His-165.

This sequence belongs to the peptidase C15 family. Homotetramer.

It localises to the cytoplasm. It carries out the reaction Release of an N-terminal pyroglutamyl group from a polypeptide, the second amino acid generally not being Pro.. Functionally, removes 5-oxoproline from various penultimate amino acid residues except L-proline. This chain is Pyrrolidone-carboxylate peptidase, found in Clostridium perfringens (strain 13 / Type A).